A 1070-amino-acid polypeptide reads, in one-letter code: Duffy receptor (1070 aa).

Positions 1-20 are cleaved as a signal peptide; that stretch reads MKGKNRSLFVLLVLLLLHKV. Topologically, residues 21-1007 are extracellular; sequence NNVLLERTIE…CFTKGGFKDK (987 aa). The disordered stretch occupies residues 116–146; sequence YMEGKDGGDKTGEEKDGEHKTDSKTDNGKGA. A compositionally biased stretch (basic and acidic residues) spans 118-142; that stretch reads EGKDGGDKTGEEKDGEHKTDSKTDN. Asparagine 183 carries an N-linked (GlcNAc...) asparagine glycan. The tract at residues 211-521 is pvRII region; mediates ACKR1 binding; that stretch reads NTVMKNCNYK…AKKNTQEVVT (311 aa). 2 cysteine pairs are disulfide-bonded: cysteine 217/cysteine 246 and cysteine 230/cysteine 237. Residues asparagine 255, asparagine 351, and asparagine 420 are each glycosylated (N-linked (GlcNAc...) asparagine). 4 cysteine pairs are disulfide-bonded: cysteine 300–cysteine 377, cysteine 415–cysteine 432, cysteine 427–cysteine 507, and cysteine 436–cysteine 505. Composition is skewed to polar residues over residues 525–542, 554–569, and 629–642; these read NAAK…QPVD, THGN…TTGK, and GASN…TVEA. Positions 525 to 906 are disordered; sequence NAAKSQATNS…HLNSNNNLSN (382 aa). Residues 697-711 show a composition bias toward basic and acidic residues; that stretch reads ETGKGQDNDMAKATK. The segment covering 712–728 has biased composition (low complexity); it reads DSSNSSDGTSSATGDTT. Asparagine 715 carries an N-linked (GlcNAc...) asparagine glycan. Basic and acidic residues predominate over residues 730 to 748; sequence AVDREINKGVPEDRDKTVG. Asparagine 787 is a glycosylation site (N-linked (GlcNAc...) asparagine). A compositionally biased stretch (low complexity) spans 808 to 817; that stretch reads LSKTESLEST. A glycan (N-linked (GlcNAc...) asparagine) is linked at asparagine 825. Composition is skewed to basic and acidic residues over residues 835 to 849 and 865 to 889; these read NGGK…DFKS and AEGH…KDTF. The span at 895-906 shows a compositional bias: low complexity; sequence SHHLNSNNNLSN. 2 N-linked (GlcNAc...) asparagine glycosylation sites follow: asparagine 903 and asparagine 938. Residues 1008-1025 form a helical membrane-spanning segment; sequence TYFAAAGALLILLLLIAS. Over 1026–1070 the chain is Cytoplasmic; the sequence is RKMIKNDSEEATFNEFEEYCDNIHRIPLMPNNIEHMQPSTPLDYS.

In terms of assembly, homodimer; dimerization (via PvRII region) is promoted by the interaction with human ACKR1. Interacts (via PvRII region) with human ACKR1 (via N-terminal extracellular domain).

The protein resides in the membrane. Its function is as follows. Binds to the human erythrocyte Duffy blood group determinant (ACKR1). The protein is Duffy receptor (PVDR) of Plasmodium vivax (strain Salvador I).